Consider the following 246-residue polypeptide: Acetoacetate decarboxylase (246 aa).

Lysine 116 acts as the Schiff-base intermediate with acetoacetate in catalysis.

Belongs to the ADC family.

The catalysed reaction is acetoacetate + H(+) = acetone + CO2. In terms of biological role, catalyzes the conversion of acetoacetate to acetone and carbon dioxide. This is Acetoacetate decarboxylase from Burkholderia ambifaria (strain MC40-6).